The chain runs to 311 residues: Replication initiation protein (311 aa).

This sequence belongs to the plasmid replication initiation factor family.

This protein is probably a specific topoisomerase involved in initiating replication. This protein is specifically required and may be rate-limiting for replication of the plasmid in vivo. The sequence is that of Replication initiation protein (repD) from Staphylococcus aureus.